A 344-amino-acid polypeptide reads, in one-letter code: Meiotic recombination protein DMC1 homolog B (344 aa).

Gly133 to Thr140 is an ATP binding site. Arg235 provides a ligand contact to dsDNA. Residues Arg235, Phe238, Arg241, Arg247, and Arg315 each coordinate ssDNA. DsDNA is bound by residues Arg241 and Arg247.

The protein belongs to the RecA family. DMC1 subfamily. As to expression, highly expressed in spikelets. Expressed in meiotic young panicles.

The protein localises to the nucleus. Recombinase that may participate in meiotic recombination, specifically in homologous strand assimilation, which is required for the resolution of meiotic double-strand breaks. Exhibits DNA-dependent ATPase activity when bound to single-stranded DNA (ssDNA). Mediates renaturation of homologous complementary strands as well as assimilation of single strands into homologous supercoiled duplexes leading to D-loop formation. Binds circular single-stranded DNA (ssDNA) and circular double-stranded DNA (dsDNA) in vitro. Catalyzes DNA homologous renaturation and DNA strand exchange. The rates of these activities are dependent on the state of ATP hydrolysis. Forms helical filaments along ssDNA and dsDNA, and promotes strand exchange between ssDNA and dsDNA with long DNA substrates of several thousand base pairs. The presence of the replication protein A is not required for this activity. Seems to be required for homologous pairing and subsequent chromosome segregation during male meiosis. May be not directly required for homologous pairing during male meiosis. Required for synaptonemal complex assembly and crossover formation. Functions redundantly with DMC1A. The chain is Meiotic recombination protein DMC1 homolog B from Oryza sativa subsp. japonica (Rice).